Consider the following 313-residue polypeptide: Hydroxyacylglutathione hydrolase, mitochondrial (313 aa).

Zn(2+) contacts are provided by H107, H109, D111, H112, H163, and D187. Residues 196-198 (KFF) and 226-228 (HEY) contribute to the substrate site. A Zn(2+)-binding site is contributed by H226. 2 stretches are compositionally biased toward basic and acidic residues: residues 285 to 294 (VQEHAGERDP) and 301 to 313 (IRKE…VPKD). Residues 285–313 (VQEHAGERDPISTMGAIRKEKDHFKVPKD) form a disordered region. A substrate-binding site is contributed by 302–305 (RKEK).

This sequence belongs to the metallo-beta-lactamase superfamily. Glyoxalase II family. Monomer. The cofactor is Zn(2+).

It localises to the mitochondrion matrix. The protein localises to the cytoplasm. The enzyme catalyses an S-(2-hydroxyacyl)glutathione + H2O = a 2-hydroxy carboxylate + glutathione + H(+). It catalyses the reaction (R)-S-lactoylglutathione + H2O = (R)-lactate + glutathione + H(+). In terms of biological role, thiolesterase that catalyzes the hydrolysis of S-D-lactoyl-glutathione to form glutathione and D-lactic acid. This is Hydroxyacylglutathione hydrolase, mitochondrial (hagh) from Xenopus tropicalis (Western clawed frog).